A 144-amino-acid chain; its full sequence is Eukaryotic translation initiation factor 1A, Y-chromosomal (144 aa).

A compositionally biased stretch (basic residues) spans 1–15; the sequence is MPKNKGKGGKNRRRG. The interval 1-26 is disordered; sequence MPKNKGKGGKNRRRGKNENESEKREL. Positions 16–26 are enriched in basic and acidic residues; sequence KNENESEKREL. Positions 22–96 constitute an S1-like domain; sequence EKRELVFKED…NKADVILKYN (75 aa). A Glycyl lysine isopeptide (Lys-Gly) (interchain with G-Cter in ubiquitin) cross-link involves residue Lys88. Residues 114–144 are disordered; that stretch reads KINETDTFGPGDDDEIQFDDIGDDDEDIDDI. Over residues 124 to 144 the composition is skewed to acidic residues; it reads GDDDEIQFDDIGDDDEDIDDI.

This sequence belongs to the eIF-1A family. As to quaternary structure, component of the 43S pre-initiation complex (43S PIC), which is composed of the 40S ribosomal subunit, EIF1, eIF1A (EIF1AX), eIF3 complex, EIF5 and eIF2-GTP-initiator tRNA complex (eIF2 ternary complex). Interacts with EIF5; this interaction contributes to the maintenance of EIF1 within the open 43S PIC. Interacts through its C-terminal domain (CTD) with the CTD of EIF5B; from the location of the start codon by the 43S complex until the formation of the 80S complex. In terms of tissue distribution, ubiquitous.

It localises to the cytoplasm. In terms of biological role, component of the 43S pre-initiation complex (43S PIC), which binds to the mRNA cap-proximal region, scans mRNA 5'-untranslated region, and locates the initiation codon. This protein enhances formation of the cap-proximal complex. Together with EIF1, facilitates scanning, start codon recognition, promotion of the assembly of 48S complex at the initiation codon (43S PIC becomes 48S PIC after the start codon is reached), and dissociation of aberrant complexes. After start codon location, together with EIF5B orients the initiator methionine-tRNA in a conformation that allows 60S ribosomal subunit joining to form the 80S initiation complex. Is released after 80S initiation complex formation, just after GTP hydrolysis by EIF5B, and before release of EIF5B. Its globular part is located in the A site of the 40S ribosomal subunit. Its interaction with EIF5 during scanning contribute to the maintenance of EIF1 within the open 43S PIC. In contrast to yeast orthologs, does not bind EIF1. The polypeptide is Eukaryotic translation initiation factor 1A, Y-chromosomal (EIF1AY) (Homo sapiens (Human)).